Reading from the N-terminus, the 3625-residue chain is Cubilin (3625 aa).

The signal sequence occupies residues M1–A20. Residues E21–R36 constitute a propeptide, removed in mature form. Residues P43–G50 form an interaction with AMN region. N106 is a glycosylation site (N-linked (GlcNAc...) asparagine). Positions D133–S169 constitute an EGF-like 1 domain. Intrachain disulfides connect C137–C148, C142–C157, C159–C168, C175–C191, C185–C200, and C202–C211. An EGF-like 2; calcium-binding domain is found at D171–A212. N257 carries an N-linked (GlcNAc...) asparagine glycan. The region spanning D264 to E305 is the EGF-like 3; calcium-binding domain. 20 disulfide bridges follow: C268–C281, C275–C290, C293–C304, C310–C325, C317–C334, C337–C348, C354–C367, C361–C377, C379–C393, C400–C410, C405–C419, C421–C430, C437–C448, C442–C457, C459–C468, C475–C501, C528–C550, C591–C617, C644–C666, and C709–C734. The region spanning D306–T349 is the EGF-like 4; calcium-binding domain. 2 consecutive EGF-like domains span residues L350–V394 and L396–T431. N-linked (GlcNAc...) asparagine glycosylation occurs at N429. Residues N433–H469 form the EGF-like 7; calcium-binding domain. 27 consecutive CUB domains span residues C475–R587, C591–T703, C709–A816, C817–E928, C932–T1042, S1045–S1163, C1167–T1279, C1280–H1391, C1393–V1508, C1512–A1621, C1622–S1736, C1740–I1852, G1854–M1965, C1980–S2093, C2094–K2215, C2219–A2336, C2338–S2450, C2454–S2567, C2572–T2689, C2691–E2803, C2807–R2921, C2922–T3037, C3039–T3152, C3159–L3276, C3280–C3397, C3397–S3509, and C3513–S3625. N-linked (GlcNAc...) asparagine glycans are attached at residues N712 and N749. Cysteines 761 and 779 form a disulfide. Residue N781 is glycosylated (N-linked (GlcNAc...) asparagine). C817 and C842 are disulfide-bonded. N-linked (GlcNAc...) asparagine glycosylation is present at N857. Cystine bridges form between C869–C891 and C932–C958. N957 carries N-linked (GlcNAc...) asparagine glycosylation. E980 serves as a coordination point for Ca(2+). The N-linked (GlcNAc...) asparagine glycan is linked to N984. C985 and C1005 form a disulfide bridge. Positions 988, 1027, 1029, and 1030 each coordinate Ca(2+). N1048 carries N-linked (GlcNAc...) asparagine glycosylation. Ca(2+)-binding residues include E1097, D1107, and D1148. A disulfide bond links C1104 and C1126. A disulfide bridge links C1167 with C1193. An N-linked (GlcNAc...) asparagine glycan is attached at N1170. E1215 contributes to the Ca(2+) binding site. The N-linked (GlcNAc...) asparagine glycan is linked to N1219. Residues C1220 and C1242 are joined by a disulfide bond. Ca(2+)-binding residues include D1223, D1264, G1266, and Q1267. C1280 and C1308 are joined by a disulfide. Residues N1287, N1309, and N1321 are each glycosylated (N-linked (GlcNAc...) asparagine). Residue E1330 participates in Ca(2+) binding. N1334 carries an N-linked (GlcNAc...) asparagine glycan. A disulfide bridge connects residues C1335 and C1353. The Ca(2+) site is built by D1338, D1375, and V1377. 2 disulfides stabilise this stretch: C1393–C1419 and C1446–C1468. Residue N1502 is glycosylated (N-linked (GlcNAc...) asparagine). Residues C1512 and C1538 are joined by a disulfide bond. A glycan (N-linked (GlcNAc...) asparagine) is linked at N1553. 5 disulfide bridges follow: C1565/C1583, C1622/C1649, C1677/C1699, C1740/C1766, and C1793/C1814. Residue N1648 is glycosylated (N-linked (GlcNAc...) asparagine). Residues N1804, N1821, and N1887 are each glycosylated (N-linked (GlcNAc...) asparagine). Intrachain disulfides connect C1907/C1929, C1980/C2008, and C2034/C2056. 2 N-linked (GlcNAc...) asparagine glycosylation sites follow: N2087 and N2119. Intrachain disulfides connect C2094/C2120 and C2219/C2249. The N-linked (GlcNAc...) asparagine glycan is linked to N2276. 2 disulfide bridges follow: C2277–C2299 and C2338–C2365. N2388 and N2402 each carry an N-linked (GlcNAc...) asparagine glycan. Cystine bridges form between C2392/C2413, C2454/C2480, and C2507/C2529. N-linked (GlcNAc...) asparagine glycosylation is found at N2533, N2583, N2594, and N2612. C2572 and C2601 are disulfide-bonded. Cystine bridges form between C2630–C2651, C2691–C2717, C2744–C2766, C2807–C2833, and C2862–C2885. N-linked (GlcNAc...) asparagine glycosylation is found at N2887, N2925, N2928, and N2947. Disulfide bonds link C2922–C2948 and C2979–C3001. A Phosphothreonine modification is found at T3010. Disulfide bonds link C3039–C3066 and C3093–C3115. N-linked (GlcNAc...) asparagine glycans are attached at residues N3044, N3105, and N3127. 2 disulfides stabilise this stretch: C3159/C3187 and C3217/C3239. N-linked (GlcNAc...) asparagine glycosylation is found at N3270 and N3285. 2 disulfides stabilise this stretch: C3280–C3308 and C3334–C3356. Residue N3359 is glycosylated (N-linked (GlcNAc...) asparagine). An intrachain disulfide couples C3397 to C3423. 3 N-linked (GlcNAc...) asparagine glycosylation sites follow: N3432, N3459, and N3535. 3 disulfides stabilise this stretch: C3450–C3472, C3513–C3539, and C3566–C3588.

As to quaternary structure, interacts with AMN. Component of the cubam complex composed of one CUBN trimer and one AMN chain. The cubam complex can dimerize. Interacts with LRP2 in a dual-receptor complex in a calcium-dependent manner. Found in a complex with PID1/PCLI1, LRP1 and CUBNI. Interacts with LRP1 and PID1/PCLI1. Post-translationally, the precursor is cleaved by a trans-Golgi proteinase furin, removing a propeptide. In terms of processing, N-glycosylated. In terms of tissue distribution, detected in kidney cortex (at protein level).

Its subcellular location is the apical cell membrane. The protein localises to the cell membrane. It is found in the membrane. It localises to the coated pit. The protein resides in the endosome. Its subcellular location is the lysosome membrane. Functionally, endocytic receptor which plays a role in lipoprotein, vitamin and iron metabolism by facilitating their uptake. Acts together with LRP2 to mediate endocytosis of high-density lipoproteins, GC, hemoglobin, ALB, TF and SCGB1A1. Acts together with AMN to mediate endocytosis of the CBLIF-cobalamin complex. Binds to ALB, MB, Kappa and lambda-light chains, TF, hemoglobin, GC, SCGB1A1, APOA1, high density lipoprotein, and the CBLIF-cobalamin complex. Ligand binding requires calcium. Serves as important transporter in several absorptive epithelia, including intestine, renal proximal tubules and embryonic yolk sac. May play an important role in the development of the peri-implantation embryo through internalization of APOA1 and cholesterol. Binds to LGALS3 at the maternal-fetal interface. This chain is Cubilin (CUBN), found in Sus scrofa (Pig).